Reading from the N-terminus, the 391-residue chain is Enoyl-CoA delta isomerase 2 (391 aa).

Residues 1–36 (MAAVTWSRARCWCPSLLQVLRLPVTKLHLGRPAMRA) constitute a mitochondrion transit peptide. One can recognise an ACB domain in the interval 37–122 (TQQDFENAMN…VSSLSSSSEA (86 aa)). K49 is subject to N6-acetyllysine; alternate. K49 carries the N6-succinyllysine; alternate modification. An N6-succinyllysine modification is found at K53. K60 carries the post-translational modification N6-acetyllysine; alternate. Residue K60 is modified to N6-succinyllysine; alternate. 64–68 (YALYK) lines the an acyl-CoA pocket. K68, K79, and K88 each carry N6-succinyllysine. K90 carries the post-translational modification N6-acetyllysine; alternate. Residue K90 is modified to N6-succinyllysine; alternate. An acyl-CoA is bound at residue K90. The residue at position 99 (S99) is a Phosphoserine. Y109 serves as a coordination point for an acyl-CoA. A Phosphoserine modification is found at S117. K127 and K159 each carry N6-succinyllysine. The interval 149 to 319 (TKITFNRPSK…AQGLVTEVFP (171 aa)) is ECH-like. 196–200 (SGNDL) is a binding site for substrate. Residue K286 is modified to N6-succinyllysine. The Microbody targeting signal signature appears at 389–391 (PKL).

This sequence in the C-terminal section; belongs to the enoyl-CoA hydratase/isomerase family. Liver (at protein level).

The protein localises to the peroxisome matrix. It is found in the mitochondrion. The catalysed reaction is a (3Z)-enoyl-CoA = a 4-saturated (2E)-enoyl-CoA. The enzyme catalyses a (3E)-enoyl-CoA = a 4-saturated (2E)-enoyl-CoA. It catalyses the reaction (2E)-tetradecenoyl-CoA = (3Z)-tetradecenoyl-CoA. It carries out the reaction (3E)-tetradecenoyl-CoA = (2E)-tetradecenoyl-CoA. The catalysed reaction is (3E)-octenoyl-CoA = (2E)-octenoyl-CoA. The enzyme catalyses (3Z)-octenoyl-CoA = (2E)-octenoyl-CoA. It catalyses the reaction (3E)-nonenoyl-CoA = (2E)-nonenoyl-CoA. It functions in the pathway lipid metabolism; fatty acid beta-oxidation. Able to isomerize both 3-cis and 3-trans double bonds into the 2-trans form in a range of enoyl-CoA species. Has a preference for 3-trans substrates. The chain is Enoyl-CoA delta isomerase 2 from Rattus norvegicus (Rat).